The sequence spans 138 residues: ATP synthase epsilon chain (138 aa).

The protein belongs to the ATPase epsilon chain family. As to quaternary structure, F-type ATPases have 2 components, CF(1) - the catalytic core - and CF(0) - the membrane proton channel. CF(1) has five subunits: alpha(3), beta(3), gamma(1), delta(1), epsilon(1). CF(0) has three main subunits: a, b and c.

Its subcellular location is the cell inner membrane. Functionally, produces ATP from ADP in the presence of a proton gradient across the membrane. The chain is ATP synthase epsilon chain from Psychrobacter sp. (strain PRwf-1).